A 22-amino-acid chain; its full sequence is Putative lactoylglutathione lyase (22 aa).

The tract at residues 1-22 (ITACLDPDGWKEPGPLPGISTK) is disordered. Catalysis depends on Glu12, which acts as the Proton donor/acceptor.

Belongs to the glyoxalase I family. It depends on Zn(2+) as a cofactor.

It catalyses the reaction (R)-S-lactoylglutathione = methylglyoxal + glutathione. Its pathway is secondary metabolite metabolism; methylglyoxal degradation; (R)-lactate from methylglyoxal: step 1/2. Its function is as follows. Catalyzes the conversion of hemimercaptal, formed from methylglyoxal and glutathione, to S-lactoylglutathione. The chain is Putative lactoylglutathione lyase from Pinus strobus (Eastern white pine).